Reading from the N-terminus, the 375-residue chain is Growth/differentiation factor 8 (375 aa).

Positions 1-23 (MQKLAVYVYIYLFMQIAVDPVAL) are cleaved as a signal peptide. Residues 24–266 (DGSSQPTENA…VTDTPKRSRR (243 aa)) constitute a propeptide that is removed on maturation. Asn71 is a glycosylation site (N-linked (GlcNAc...) asparagine). 4 cysteine pairs are disulfide-bonded: Cys272/Cys282, Cys281/Cys340, Cys309/Cys372, and Cys313/Cys374.

The protein belongs to the TGF-beta family. As to quaternary structure, homodimer; disulfide-linked.

It localises to the secreted. Its function is as follows. Acts specifically as a negative regulator of skeletal muscle growth. This chain is Growth/differentiation factor 8 (MSTN), found in Gallus gallus (Chicken).